Consider the following 446-residue polypeptide: Transcription factor Dp-2 (446 aa).

T2 is subject to N-acetylthreonine. Residues S24 and S42 each carry the phosphoserine; by CDK2 modification. The tract at residues 60 to 82 (PQMIISTPQRIANSGSVLIGNPY) is interaction with CEBPA. The Nuclear localization signal motif lies at 103–118 (SDRKRAREFIDSDFSE). S122 is subject to Phosphoserine. The DNA-binding element occupies 129-210 (GKGLRHFSMK…PTGKKRNQVD (82 aa)). Residues 176–210 (DQENIRRRVYDALNVLMAMNIISSLPTGKKRNQVD) carry the DEF box motif. A dimerization region spans residues 219-292 (NLEIEKQRRI…RKTVIDCSIS (74 aa)). Residues 229 to 261 (ERIKQKRAQLQELLLQQIAFKNLVQRNRQNEQQ) are DCB1. Residues 274 to 330 (LPFIIINTSRKTVIDCSISSDKFEYLFNFDNTFEIHDDIEVLKRMGMSFGLESGKCS) are DCB2. The disordered stretch occupies residues 404–446 (LPASNSHQSSSAASHFSESRGETPCSFNDEDEEDEEEDPSSPE). The segment covering 406–419 (ASNSHQSSSAASHF) has biased composition (low complexity). Residues 431–446 (NDEDEEDEEEDPSSPE) show a composition bias toward acidic residues.

It belongs to the E2F/DP family. Component of the DRTF1/E2F transcription factor complex. Forms heterodimers with E2F family members. The complex can interact with hypophosphorylated retinoblastoma protein RB1 and related proteins (RBL1 and RBL2) that inhibit the E2F transactivation domain. During the cell cycle, RB becomes phosphorylated in mid-to-late G1 phase, detaches from the DRTF1/E2F complex rendering E2F transcriptionally active. Interacts with GMCL. Component of the DREAM complex (also named LINC complex) at least composed of E2F4, E2F5, LIN9, LIN37, LIN52, LIN54, MYBL1, MYBL2, RBL1, RBL2, RBBP4, TFDP1 and TFDP2. The complex exists in quiescent cells where it represses cell cycle-dependent genes. It dissociates in S phase when LIN9, LIN37, LIN52 and LIN54 form a subcomplex that binds to MYBL2. The complex TFDP2:E2F1 interacts with CEBPA; the interaction prevents CEBPA binding to target gene promoters and represses its transcriptional activity. Post-translationally, phosphorylation by E2F1-bound cyclin A-CDK2, in the S phase, inhibits E2F-mediated DNA binding and transactivation. As to expression, expressed in all tissues examined. Highest levels in spleen and heart.

Its subcellular location is the nucleus. Can stimulate E2F-dependent transcription. Binds DNA cooperatively with E2F family members through the E2 recognition site, 5'-TTTC[CG]CGC-3', found in the promoter region of a number of genes whose products are involved in cell cycle regulation or in DNA replication. The TFDP2:E2F complex functions in the control of cell-cycle progression from G1 to S phase. The E2F1:DP complex appears to mediate both cell proliferation and apoptosis. Blocks adipocyte differentiation by repressing CEBPA binding to its target gene promoters. This chain is Transcription factor Dp-2 (Tfdp2), found in Mus musculus (Mouse).